Consider the following 110-residue polypeptide: uncharacterized protein (110 aa).

The N-terminal stretch at 1–19 is a signal peptide; it reads MKYLVGCLCLAAICLSAGA. N-linked (GlcNAc...) asparagine glycosylation occurs at Asn101.

In terms of tissue distribution, component of the acid-soluble and acid-insoluble organic matrix of prismatic shell layers (at protein level).

It localises to the secreted. This is an uncharacterized protein from Haliotis asinina (Donkey's ear abalone).